We begin with the raw amino-acid sequence, 396 residues long: Elongation factor Tu (396 aa).

The 197-residue stretch at 10-206 folds into the tr-type G domain; sequence KPHVNIGTIG…ACDTYIPAPV (197 aa). A G1 region spans residues 19–26; that stretch reads GHVDHGKT. 19 to 26 is a binding site for GTP; sequence GHVDHGKT. Position 26 (Thr-26) interacts with Mg(2+). The G2 stretch occupies residues 60 to 64; that stretch reads GITIS. Residues 81-84 form a G3 region; that stretch reads DCPG. Residues 81–85 and 136–139 each bind GTP; these read DCPGH and NKVD. The interval 136–139 is G4; it reads NKVD. The G5 stretch occupies residues 174–176; sequence SAL.

Belongs to the TRAFAC class translation factor GTPase superfamily. Classic translation factor GTPase family. EF-Tu/EF-1A subfamily. Monomer.

The protein resides in the cytoplasm. The catalysed reaction is GTP + H2O = GDP + phosphate + H(+). GTP hydrolase that promotes the GTP-dependent binding of aminoacyl-tRNA to the A-site of ribosomes during protein biosynthesis. In Bdellovibrio bacteriovorus (strain ATCC 15356 / DSM 50701 / NCIMB 9529 / HD100), this protein is Elongation factor Tu.